The sequence spans 218 residues: Alkylmercury lyase (218 aa).

The protein belongs to the MerB family.

It catalyses the reaction an alkylmercury + H(+) = an alkane + Hg(2+). Functionally, cleaves the carbon-mercury bond of organomercurials such as phenylmercuric acetate. One product is Hg(2+), which is subsequently detoxified by the mercuric reductase. This Bacillus cereus protein is Alkylmercury lyase (merB1).